A 284-amino-acid chain; its full sequence is tRNA pseudouridine synthase B (284 aa).

Residue D40 is the Nucleophile of the active site.

This sequence belongs to the pseudouridine synthase TruB family. Type 1 subfamily.

The catalysed reaction is uridine(55) in tRNA = pseudouridine(55) in tRNA. Responsible for synthesis of pseudouridine from uracil-55 in the psi GC loop of transfer RNAs. This chain is tRNA pseudouridine synthase B, found in Helicobacter hepaticus (strain ATCC 51449 / 3B1).